The following is a 248-amino-acid chain: Anamorsin homolog (248 aa).

The segment at 4-130 (FKGLQKSLYI…ETGSSARLSF (127 aa)) is N-terminal SAM-like domain. Residues 131–161 (AKKSPSMNVWKISGDDEELIDEEELLDEEDK) are linker. [2Fe-2S] cluster contacts are provided by cysteine 172, cysteine 181, cysteine 184, and cysteine 186. A fe-S binding site A region spans residues 172 to 186 (CSTTGKRKACKNCSC). The [4Fe-4S] cluster site is built by cysteine 209, cysteine 212, cysteine 220, and cysteine 223. 2 consecutive short sequence motifs (cx2C motif) follow at residues 209–212 (CGNC) and 220–223 (CSTC). A fe-S binding site B region spans residues 209–223 (CGNCYLGDAFRCSTC).

This sequence belongs to the anamorsin family. As to quaternary structure, monomer. It depends on [2Fe-2S] cluster as a cofactor. The cofactor is [4Fe-4S] cluster.

The protein localises to the cytoplasm. Its subcellular location is the mitochondrion intermembrane space. Functionally, component of the cytosolic iron-sulfur (Fe-S) protein assembly (CIA) machinery. Required for the maturation of extramitochondrial Fe-S proteins. Part of an electron transfer chain functioning in an early step of cytosolic Fe-S biogenesis, facilitating the de novo assembly of a [4Fe-4S] cluster on the cytosolic Fe-S scaffold complex. Electrons are transferred from NADPH via a FAD- and FMN-containing diflavin oxidoreductase. Together with the diflavin oxidoreductase, also required for the assembly of the diferric tyrosyl radical cofactor of ribonucleotide reductase (RNR), probably by providing electrons for reduction during radical cofactor maturation in the catalytic small subunit. The sequence is that of Anamorsin homolog from Drosophila mojavensis (Fruit fly).